The primary structure comprises 697 residues: tRNA 5-methylaminomethyl-2-thiouridine biosynthesis bifunctional protein MnmC (697 aa).

The tRNA (mnm(5)s(2)U34)-methyltransferase stretch occupies residues 1 to 272 (MPKPASMAMN…KREMLTAVMS (272 aa)). An FAD-dependent cmnm(5)s(2)U34 oxidoreductase region spans residues 300–697 (IGAGVAGLLT…HKHKTRQAVI (398 aa)).

It in the N-terminal section; belongs to the methyltransferase superfamily. tRNA (mnm(5)s(2)U34)-methyltransferase family. The protein in the C-terminal section; belongs to the DAO family. FAD serves as cofactor.

Its subcellular location is the cytoplasm. The enzyme catalyses 5-aminomethyl-2-thiouridine(34) in tRNA + S-adenosyl-L-methionine = 5-methylaminomethyl-2-thiouridine(34) in tRNA + S-adenosyl-L-homocysteine + H(+). Functionally, catalyzes the last two steps in the biosynthesis of 5-methylaminomethyl-2-thiouridine (mnm(5)s(2)U) at the wobble position (U34) in tRNA. Catalyzes the FAD-dependent demodification of cmnm(5)s(2)U34 to nm(5)s(2)U34, followed by the transfer of a methyl group from S-adenosyl-L-methionine to nm(5)s(2)U34, to form mnm(5)s(2)U34. This Psychrobacter cryohalolentis (strain ATCC BAA-1226 / DSM 17306 / VKM B-2378 / K5) protein is tRNA 5-methylaminomethyl-2-thiouridine biosynthesis bifunctional protein MnmC.